We begin with the raw amino-acid sequence, 793 residues long: E3 UFM1-protein ligase 1 (793 aa).

A2 bears the N-acetylalanine mark. Residues 2–200 (ADAWEEIRRL…RGLFSAITRP (199 aa)) form a mediates interaction with DDRGK1 region. The segment at 2–212 (ADAWEEIRRL…VNSLVSKYGF (211 aa)) is required for E3 UFM1-protein ligase activity. The segment at 121–250 (DRLSEEVNDK…KAVFVPDIYS (130 aa)) is involved in CDK5RAP3-binding. The mediates interaction with TRIP4 stretch occupies residues 200–400 (PTAVNSLVSK…NPVHLITEED (201 aa)). Residues 410–473 (VNTNKKDKKD…SSHAGKKKPD (64 aa)) form a disordered region. R433 bears the Omega-N-methylarginine mark. Residues S458 and S462 each carry the phosphoserine modification. A mediates interaction with CDK5RAP3 region spans residues 490–683 (IPDAPEEFIS…QLKVTEDPAL (194 aa)). T535 carries the phosphothreonine modification. The disordered stretch occupies residues 742–769 (NKKSGQGEDPSSDDLDKEQHDVTNTTRK). A phosphoserine mark is found at S752 and S753. Positions 758 to 769 (KEQHDVTNTTRK) are enriched in basic and acidic residues.

It belongs to the UFL1 family. In terms of assembly, catalytic component of the UFM1 ribosome E3 ligase (UREL) complex, composed of UFL1, DDRGK1 and CDK5RAP3. Interacts with E2-like enzyme UFC1. Interacts with RELA. Interacts with NBN; promoting recruitment to double-strand breaks following DNA damage. Interacts (when phosphorylated) with YWHAG/14-3-3-gamma; sequestering UFL1 and preventing its association with PDCD1/PD-1 substrate. In terms of processing, ubiquitinated, leading to its degradation by the proteasome. Interaction with CDK5RAP3 protects both proteins against ubiquitination and degradation via the proteasome. Phosphorylated at Ser-462 by ATM, enhancing protein ligase activity and promoting ATM activation in a positive feedback loop. Phosphorylation at Thr-535 by AMPK promotes its interaction with YWHAG/14-3-3-gamma, thereby preventing UFL1 association with PDCD1/PD-1 substrate. As to expression, ubiquitously expressed with expression detected in brain, skeletal muscle, lung, heart, gall bladder, liver, small intestine, pancreas, spleen and kidney (at protein level). At 8 weeks after birth, high expression in the Purkinje cell layer of the cerebellum.

Its subcellular location is the endoplasmic reticulum membrane. It localises to the cytoplasm. It is found in the cytosol. The protein resides in the nucleus. The protein localises to the chromosome. Functionally, E3 protein ligase that mediates ufmylation, the covalent attachment of the ubiquitin-like modifier UFM1 to lysine residues on target proteins, and which plays a key role in various processes, such as ribosome recycling, response to DNA damage, interferon response or reticulophagy (also called ER-phagy). Catalyzes ufmylation of many protein, such as CD274/PD-L1, CDK5RAP3, CYB5R3, DDRGK1, EIF6, histone H4, MRE11, P4HB, PDCD1/PD-1, TRIP4, RPN1, RPS20/uS10, RPL10/uL16, RPL26/uL24, SYVN1/HRD1 and TP53/p53. As part of the UREL complex, plays a key role in ribosome recycling by catalyzing mono-ufmylation of RPL26/uL24 subunit of the 60S ribosome. Ufmylation of RPL26/uL24 occurs on free 60S ribosomes following ribosome dissociation: it weakens the junction between post-termination 60S subunits and SEC61 translocons, promoting release and recycling of the large ribosomal subunit from the endoplasmic reticulum membrane. Ufmylation of RPL26/uL24 and subsequent 60S ribosome recycling either take place after normal termination of translation or after ribosome stalling during cotranslational translocation at the endoplasmic reticulum. Involved in reticulophagy in response to endoplasmic reticulum stress by mediating ufmylation of proteins such as CYB5R3 and RPN1, thereby promoting lysosomal degradation of ufmylated proteins. Ufmylation in response to endoplasmic reticulum stress is essential for processes such as hematopoiesis, blood vessel morphogenesis or inflammatory response. Mediates ufmylation of DDRGK1 and CDK5RAP3; the role of these modifications is however unclear: as both DDRGK1 and CDK5RAP3 act as substrate adapters for ufmylation, it is uncertain whether ufmylation of these proteins is, a collateral effect or is required for ufmylation. Acts as a negative regulator of T-cell activation by mediating ufmylation and stabilization of PDCD1/PD-1. Also involved in the response to DNA damage: recruited to double-strand break sites following DNA damage and mediates monoufmylation of histone H4 and ufmylation of MRE11. Mediates ufmylation of TP53/p53, promoting its stability. Catalyzes ufmylation of TRIP4, thereby playing a role in nuclear receptor-mediated transcription. Required for hematopoietic stem cell function and hematopoiesis. In Rattus norvegicus (Rat), this protein is E3 UFM1-protein ligase 1.